Reading from the N-terminus, the 1078-residue chain is Isoleucine--tRNA ligase (1078 aa).

A 'HIGH' region motif is present at residues 52–62; it reads PTANGKPALHH. The 'KMSKS' region motif lies at 637–641; it reads KMSKS. Lys640 contacts ATP.

This sequence belongs to the class-I aminoacyl-tRNA synthetase family. IleS type 2 subfamily. In terms of assembly, monomer. The cofactor is Zn(2+).

The protein localises to the cytoplasm. It carries out the reaction tRNA(Ile) + L-isoleucine + ATP = L-isoleucyl-tRNA(Ile) + AMP + diphosphate. In terms of biological role, catalyzes the attachment of isoleucine to tRNA(Ile). As IleRS can inadvertently accommodate and process structurally similar amino acids such as valine, to avoid such errors it has two additional distinct tRNA(Ile)-dependent editing activities. One activity is designated as 'pretransfer' editing and involves the hydrolysis of activated Val-AMP. The other activity is designated 'posttransfer' editing and involves deacylation of mischarged Val-tRNA(Ile). The sequence is that of Isoleucine--tRNA ligase from Deinococcus radiodurans (strain ATCC 13939 / DSM 20539 / JCM 16871 / CCUG 27074 / LMG 4051 / NBRC 15346 / NCIMB 9279 / VKM B-1422 / R1).